We begin with the raw amino-acid sequence, 478 residues long: Solute carrier family 49 member 4 (478 aa).

The tract at residues 1-27 (MGSGWSSEEEERQPLLGPGLGPAPGAA) is disordered. The Cytoplasmic portion of the chain corresponds to 1–51 (MGSGWSSEEEERQPLLGPGLGPAPGAARRGREATAVLPAAGPNPGRVYGRR). A Di-leucine motif; mediates lysosomal localization motif is present at residues 15–16 (LL). The helical transmembrane segment at 52–72 (WLVLLLFSLLAFAQGLVWNTW) threads the bilayer. Residues 73–89 (GPIQNSARQAYGFSGWD) are Lumenal-facing. Residues 90–110 (IALLVLWGPIGFLPCFAFMWL) traverse the membrane as a helical segment. Over 111–117 (LDKRGLR) the chain is Cytoplasmic. The helical transmembrane segment at 118-138 (VTVLLTSFLMVLGTGLRCIPV) threads the bilayer. At 139–152 (SDLALKKRLIHGGQ) the chain is on the lumenal side. The helical transmembrane segment at 153–173 (ILNGLAGPTVMNAAPFLSTTW) threads the bilayer. At 174–184 (FSADERATATA) the chain is on the cytoplasmic side. The chain crosses the membrane as a helical span at residues 185–205 (IASMLSYLGGACAFLVGPLVV). Residues 206-229 (PAPNGTAPLLAAESSRAHIKDRIE) lie on the Lumenal side of the membrane. Residue N209 is glycosylated (N-linked (GlcNAc...) asparagine). Residues 230 to 250 (TVLYAEFGVVCLIFSATLAYF) traverse the membrane as a helical segment. Residues 251–281 (PPRPPLPPSVAAASQRLSYRRSFCRLLSNLR) lie on the Cytoplasmic side of the membrane. A helical transmembrane segment spans residues 282–302 (FLMIALAYAIPLGVFAGWSGV). Topologically, residues 303 to 314 (LDLILTPVHVSQ) are lumenal. The chain crosses the membrane as a helical span at residues 315–335 (VDAGWIGFWSIVGGCVVGIAM). At 336–347 (ARFADFIRGMLK) the chain is on the cytoplasmic side. Residues 348-368 (LILLLLFSGATLSSTWFTLTC) traverse the membrane as a helical segment. At 369-384 (LNSITHLPLTTVTLYA) the chain is on the lumenal side. A helical transmembrane segment spans residues 385 to 405 (SCILLGVFLNSSVPIFFELFV). Residues 406 to 414 (ETVYPVPEG) lie on the Cytoplasmic side of the membrane. The helical transmembrane segment at 415–435 (ITCGVVTFLSNMFMGVLLFFV) threads the bilayer. Residues 436–442 (TFYHTEL) lie on the Lumenal side of the membrane. The helical transmembrane segment at 443–463 (SWFNWCLPGSCLLSLLLILCF) threads the bilayer. Residues 464 to 478 (RESYDRLYLDVVVSV) are Cytoplasmic-facing.

Belongs to the major facilitator superfamily. Cleaved in lysosomes by cathepsin L between Leu-214 and Ala-261, generating a N-glycosylated N-terminal and a non-glycosylated C-terminal fragment.

The protein resides in the lysosome membrane. It catalyses the reaction pyridoxine(out) + n H(+)(out) = pyridoxine(in) + n H(+)(in). In terms of biological role, mediates H(+)-dependent pyridoxine transport. The chain is Solute carrier family 49 member 4 (Slc49a4) from Mus musculus (Mouse).